The chain runs to 538 residues: Serine/threonine-protein phosphatase 5 (538 aa).

TPR repeat units lie at residues 13 to 46 (AEEF…NSNN), 48 to 80 (VYWA…DSRY), and 81 to 114 (SKGY…SPND). The next 2 helical transmembrane spans lie at 163–183 (SSMP…VVAV) and 185–205 (GFAT…TFWW). Residues Asp282, His284, Asp311, and Asn343 each coordinate Mn(2+). Catalysis depends on His344, which acts as the Proton donor. Mn(2+)-binding residues include His392 and His467.

Belongs to the PPP phosphatase family. PP-5 (PP-T) subfamily. In terms of assembly, interacts with PHYA and PHYB, mostly when they are phosphorylated and in Pfr forms. It depends on Mn(2+) as a cofactor.

Its subcellular location is the endoplasmic reticulum membrane. The protein resides in the nucleus membrane. It is found in the cytoplasm. It localises to the nucleus. The protein localises to the nucleoplasm. Its subcellular location is the nucleus speckle. It carries out the reaction O-phospho-L-seryl-[protein] + H2O = L-seryl-[protein] + phosphate. It catalyses the reaction O-phospho-L-threonyl-[protein] + H2O = L-threonyl-[protein] + phosphate. With respect to regulation, activated by arachidonic acid (AA). Isoform 2 dephosphorylates phosphorylated phytochromes, with a preference toward Pfr forms, and enhances phytochrome-mediated photoresponses, probably by enhancing their stability and their binding affinity for light signal transducers such as NDPK2. Can use para-nitrophenylphosphate (pNPP) as substrate. The chain is Serine/threonine-protein phosphatase 5 (PAPP5) from Arabidopsis thaliana (Mouse-ear cress).